The chain runs to 135 residues: Large ribosomal subunit protein uL16c (135 aa).

Basic residues predominate over residues 1 to 17 (MLSPKRTRFRKQHRGRM). The segment at 1–21 (MLSPKRTRFRKQHRGRMKGVS) is disordered.

It belongs to the universal ribosomal protein uL16 family. Part of the 50S ribosomal subunit.

It is found in the plastid. The protein localises to the chloroplast. The protein is Large ribosomal subunit protein uL16c of Amborella trichopoda.